Consider the following 74-residue polypeptide: ATP synthase subunit 9, mitochondrial (74 aa).

2 helical membrane passes run 16–36 (GLIG…LGVA) and 50–70 (ILGF…AFLL).

The protein belongs to the ATPase C chain family. In terms of assembly, F-type ATPases have 2 components, CF(1) - the catalytic core - and CF(0) - the membrane proton channel. CF(1) has five subunits: alpha(3), beta(3), gamma(1), delta(1), epsilon(1). CF(0) has three main subunits: a, b and c.

Its subcellular location is the mitochondrion membrane. Functionally, mitochondrial membrane ATP synthase (F(1)F(0) ATP synthase or Complex V) produces ATP from ADP in the presence of a proton gradient across the membrane which is generated by electron transport complexes of the respiratory chain. F-type ATPases consist of two structural domains, F(1) - containing the extramembraneous catalytic core and F(0) - containing the membrane proton channel, linked together by a central stalk and a peripheral stalk. During catalysis, ATP synthesis in the catalytic domain of F(1) is coupled via a rotary mechanism of the central stalk subunits to proton translocation. Part of the complex F(0) domain. A homomeric c-ring of probably 10 subunits is part of the complex rotary element. The chain is ATP synthase subunit 9, mitochondrial (ATP9) from Trichophyton rubrum (Athlete's foot fungus).